The following is a 159-amino-acid chain: Phosphopantetheine adenylyltransferase (159 aa).

Ser9 contacts substrate. Residues 9 to 10 and His17 contribute to the ATP site; that span reads SF. Residues Lys41, Ile75, and Lys89 each coordinate substrate. ATP-binding positions include 90-92, Glu100, and 124-130; these read GLR and LEHISSS.

It belongs to the bacterial CoaD family. As to quaternary structure, homohexamer. Requires Mg(2+) as cofactor.

The protein localises to the cytoplasm. It catalyses the reaction (R)-4'-phosphopantetheine + ATP + H(+) = 3'-dephospho-CoA + diphosphate. The protein operates within cofactor biosynthesis; coenzyme A biosynthesis; CoA from (R)-pantothenate: step 4/5. Its function is as follows. Reversibly transfers an adenylyl group from ATP to 4'-phosphopantetheine, yielding dephospho-CoA (dPCoA) and pyrophosphate. In Bifidobacterium animalis subsp. lactis (strain AD011), this protein is Phosphopantetheine adenylyltransferase.